A 565-amino-acid polypeptide reads, in one-letter code: Probable alpha-L-arabinofuranosidase A (565 aa).

Residues 1–19 form the signal peptide; it reads MPLSAAIKSSLSVSVRADA. Residues Asn-71, Asn-91, Asn-128, Asn-303, Asn-362, Asn-486, and Asn-501 are each glycosylated (N-linked (GlcNAc...) asparagine).

The protein belongs to the glycosyl hydrolase 51 family.

The protein localises to the secreted. The enzyme catalyses Hydrolysis of terminal non-reducing alpha-L-arabinofuranoside residues in alpha-L-arabinosides.. Its pathway is glycan metabolism; L-arabinan degradation. Alpha-L-arabinofuranosidase involved in the degradation of arabinoxylan, a major component of plant hemicellulose. Acts only on small linear 1,5-alpha-linked L-arabinofuranosyl oligosaccharides. This chain is Probable alpha-L-arabinofuranosidase A (abfA), found in Emericella nidulans (strain FGSC A4 / ATCC 38163 / CBS 112.46 / NRRL 194 / M139) (Aspergillus nidulans).